The chain runs to 210 residues: Potassium-transporting ATPase KdpC subunit (210 aa).

Residues 13-33 (LVTLVLLLVCGLAYPLILTGI) traverse the membrane as a helical segment.

This sequence belongs to the KdpC family. The system is composed of three essential subunits: KdpA, KdpB and KdpC.

The protein resides in the cell membrane. Part of the high-affinity ATP-driven potassium transport (or Kdp) system, which catalyzes the hydrolysis of ATP coupled with the electrogenic transport of potassium into the cytoplasm. This subunit acts as a catalytic chaperone that increases the ATP-binding affinity of the ATP-hydrolyzing subunit KdpB by the formation of a transient KdpB/KdpC/ATP ternary complex. The chain is Potassium-transporting ATPase KdpC subunit from Clostridium kluyveri (strain ATCC 8527 / DSM 555 / NBRC 12016 / NCIMB 10680 / K1).